The primary structure comprises 394 residues: 1-deoxy-D-xylulose 5-phosphate reductoisomerase (394 aa).

Residues Thr12, Gly13, Ser14, Ile15, Lys39, Gln40, and Asn126 each contribute to the NADPH site. Lys127 is a 1-deoxy-D-xylulose 5-phosphate binding site. Glu128 serves as a coordination point for NADPH. Asp152 is a Mn(2+) binding site. 1-deoxy-D-xylulose 5-phosphate is bound by residues Ser153, Glu154, Ser183, and His206. Glu154 serves as a coordination point for Mn(2+). Gly212 lines the NADPH pocket. 1-deoxy-D-xylulose 5-phosphate contacts are provided by Ser219, Asn224, Lys225, and Glu228. A Mn(2+)-binding site is contributed by Glu228.

It belongs to the DXR family. It depends on Mg(2+) as a cofactor. Requires Mn(2+) as cofactor.

The enzyme catalyses 2-C-methyl-D-erythritol 4-phosphate + NADP(+) = 1-deoxy-D-xylulose 5-phosphate + NADPH + H(+). The protein operates within isoprenoid biosynthesis; isopentenyl diphosphate biosynthesis via DXP pathway; isopentenyl diphosphate from 1-deoxy-D-xylulose 5-phosphate: step 1/6. Functionally, catalyzes the NADPH-dependent rearrangement and reduction of 1-deoxy-D-xylulose-5-phosphate (DXP) to 2-C-methyl-D-erythritol 4-phosphate (MEP). The sequence is that of 1-deoxy-D-xylulose 5-phosphate reductoisomerase from Neisseria meningitidis serogroup B (strain ATCC BAA-335 / MC58).